The sequence spans 439 residues: Ribosomal protein uS12 methylthiotransferase RimO (439 aa).

The 113-residue stretch at 2–114 folds into the MTTase N-terminal domain; it reads SKLYLMSLGC…VDEMILKKTN (113 aa). 6 residues coordinate [4Fe-4S] cluster: Cys-11, Cys-45, Cys-77, Cys-146, Cys-150, and Cys-153. The region spanning 132–363 is the Radical SAM core domain; that stretch reads TGSNSHAFIK…VNEVIEKSFE (232 aa).

Belongs to the methylthiotransferase family. RimO subfamily. It depends on [4Fe-4S] cluster as a cofactor.

Its subcellular location is the cytoplasm. It carries out the reaction L-aspartate(89)-[ribosomal protein uS12]-hydrogen + (sulfur carrier)-SH + AH2 + 2 S-adenosyl-L-methionine = 3-methylsulfanyl-L-aspartate(89)-[ribosomal protein uS12]-hydrogen + (sulfur carrier)-H + 5'-deoxyadenosine + L-methionine + A + S-adenosyl-L-homocysteine + 2 H(+). Functionally, catalyzes the methylthiolation of an aspartic acid residue of ribosomal protein uS12. The protein is Ribosomal protein uS12 methylthiotransferase RimO of Campylobacter jejuni (strain RM1221).